Reading from the N-terminus, the 222-residue chain is MSLIRTILKLVVVVGFLSLTVQFIRHWMANKQYVFTKEEVAKLAKQYAGQDHEQAFSKVVVELRRRYPGHILPDEDLQWVFVNAGGWMGSMCLLHASLTEYVLLFGTAVDTGGHSGRYWAEISDTIISGTFRQWKEGTTKSETYYPGDTIVHSAGEATSVQWSSGTWMVEYGRGFIPSTLGFALADTMFSTQDFLTLFYTARVYVKGMILEASTFLTESGVL.

Over 1 to 6 (MSLIRT) the chain is Lumenal. A helical transmembrane segment spans residues 7–29 (ILKLVVVVGFLSLTVQFIRHWMA). Residues 30–222 (NKQYVFTKEE…STFLTESGVL (193 aa)) are Cytoplasmic-facing. Residues 97–104 (SLTEYVLL) are important for ligand-binding. The tract at residues 175-222 (FIPSTLGFALADTMFSTQDFLTLFYTARVYVKGMILEASTFLTESGVL) is C-terminal hydrophobic region.

Belongs to the ERG2 family. As to quaternary structure, homotrimer.

The protein resides in the nucleus inner membrane. The protein localises to the nucleus outer membrane. It is found in the nucleus envelope. It localises to the cytoplasmic vesicle. Its subcellular location is the endoplasmic reticulum membrane. The protein resides in the membrane. May function in lipid transport from the endoplasmic reticulum and be involved in a wide array of cellular functions probably through regulation of the biogenesis of lipid microdomains at the plasma membrane. May regulate calcium efflux at the endoplasmic reticulum. The sequence is that of Sigma non-opioid intracellular receptor 1 (sigmar1) from Danio rerio (Zebrafish).